The primary structure comprises 932 residues: Alanine--tRNA ligase, mitochondrial (932 aa).

The tract at residues Ser-458–Pro-480 is disordered. A compositionally biased stretch (low complexity) spans Thr-464–Gln-478. 4 residues coordinate Zn(2+): His-610, His-614, Cys-713, and His-717.

The protein belongs to the class-II aminoacyl-tRNA synthetase family. In terms of assembly, monomer. The cofactor is Zn(2+).

The protein localises to the mitochondrion. It carries out the reaction tRNA(Ala) + L-alanine + ATP = L-alanyl-tRNA(Ala) + AMP + diphosphate. In terms of biological role, catalyzes the attachment of alanine to tRNA(Ala) in a two-step reaction: alanine is first activated by ATP to form Ala-AMP and then transferred to the acceptor end of tRNA(Ala). Also edits incorrectly charged tRNA(Ala) via its editing domain. The sequence is that of Alanine--tRNA ligase, mitochondrial (malaS) from Dictyostelium discoideum (Social amoeba).